A 383-amino-acid chain; its full sequence is DNA-directed RNA polymerase subunit alpha (383 aa).

The segment at methionine 1–leucine 240 is alpha N-terminal domain (alpha-NTD). Residues isoleucine 306 to lysine 383 are alpha C-terminal domain (alpha-CTD).

Belongs to the RNA polymerase alpha chain family. In plastids the minimal PEP RNA polymerase catalytic core is composed of four subunits: alpha, beta, beta', and beta''. When a (nuclear-encoded) sigma factor is associated with the core the holoenzyme is formed, which can initiate transcription.

It localises to the plastid. Its subcellular location is the chloroplast. It catalyses the reaction RNA(n) + a ribonucleoside 5'-triphosphate = RNA(n+1) + diphosphate. DNA-dependent RNA polymerase catalyzes the transcription of DNA into RNA using the four ribonucleoside triphosphates as substrates. This chain is DNA-directed RNA polymerase subunit alpha, found in Staurastrum punctulatum (Green alga).